The sequence spans 456 residues: Adenylosuccinate lyase (456 aa).

N(6)-(1,2-dicarboxyethyl)-AMP is bound by residues 15-16 (RY), 90-92 (NHD), and 122-123 (TS). The active-site Proton donor/acceptor is the His-171. Gln-247 provides a ligand contact to N(6)-(1,2-dicarboxyethyl)-AMP. The active-site Proton donor/acceptor is Ser-295. N(6)-(1,2-dicarboxyethyl)-AMP-binding positions include Ser-296, 301-303 (KVN), Asn-309, Arg-335, and 340-344 (STVLR).

Belongs to the lyase 1 family. Adenylosuccinate lyase subfamily. Homotetramer. Residues from neighboring subunits contribute catalytic and substrate-binding residues to each active site.

The enzyme catalyses N(6)-(1,2-dicarboxyethyl)-AMP = fumarate + AMP. It catalyses the reaction (2S)-2-[5-amino-1-(5-phospho-beta-D-ribosyl)imidazole-4-carboxamido]succinate = 5-amino-1-(5-phospho-beta-D-ribosyl)imidazole-4-carboxamide + fumarate. It functions in the pathway purine metabolism; AMP biosynthesis via de novo pathway; AMP from IMP: step 2/2. Its pathway is purine metabolism; IMP biosynthesis via de novo pathway; 5-amino-1-(5-phospho-D-ribosyl)imidazole-4-carboxamide from 5-amino-1-(5-phospho-D-ribosyl)imidazole-4-carboxylate: step 2/2. Catalyzes two reactions in de novo purine nucleotide biosynthesis. Catalyzes the breakdown of 5-aminoimidazole- (N-succinylocarboxamide) ribotide (SAICAR or 2-[5-amino-1-(5-phospho-beta-D-ribosyl)imidazole-4-carboxamido]succinate) to 5-aminoimidazole-4-carboxamide ribotide (AICAR or 5-amino-1-(5-phospho-beta-D-ribosyl)imidazole-4-carboxamide) and fumarate, and of adenylosuccinate (ADS or N(6)-(1,2-dicarboxyethyl)-AMP) to adenosine monophosphate (AMP) and fumarate. The sequence is that of Adenylosuccinate lyase (purB) from Legionella pneumophila (strain Corby).